The chain runs to 78 residues: UPF0291 protein LBUL_1264 (78 aa).

Belongs to the UPF0291 family.

It is found in the cytoplasm. This chain is UPF0291 protein LBUL_1264, found in Lactobacillus delbrueckii subsp. bulgaricus (strain ATCC BAA-365 / Lb-18).